We begin with the raw amino-acid sequence, 179 residues long: Adenine phosphoribosyltransferase (179 aa).

The protein belongs to the purine/pyrimidine phosphoribosyltransferase family. Homodimer.

Its subcellular location is the cytoplasm. It carries out the reaction AMP + diphosphate = 5-phospho-alpha-D-ribose 1-diphosphate + adenine. It participates in purine metabolism; AMP biosynthesis via salvage pathway; AMP from adenine: step 1/1. Functionally, catalyzes a salvage reaction resulting in the formation of AMP, that is energically less costly than de novo synthesis. This Bradyrhizobium diazoefficiens (strain JCM 10833 / BCRC 13528 / IAM 13628 / NBRC 14792 / USDA 110) protein is Adenine phosphoribosyltransferase.